We begin with the raw amino-acid sequence, 225 residues long: Glutathione S-transferase-like protein tpcF (225 aa).

A GST N-terminal domain is found at Ile4–His85. Residues Gly92–Thr225 form the GST C-terminal domain.

The protein belongs to the GST superfamily. In terms of tissue distribution, specifically expressed in conidia.

Its pathway is secondary metabolite biosynthesis. Its function is as follows. Glutathione S-transferase-like protein; part of the gene cluster that mediates the biosynthesis of trypacidin, a mycotoxin with antiprotozoal activity and that plays a role in the infection process. The pathway begins with the synthesis of atrochrysone thioester by the polyketide synthase (PKS) tpcC. The atrochrysone carboxyl ACP thioesterase tpcB then breaks the thioester bond and releases the atrochrysone carboxylic acid from tpcC. The decarboxylase tpcK converts atrochrysone carboxylic acid to atrochrysone which is further reduced into emodin anthrone. The next step is performed by the emodin anthrone oxygenase tpcL that catalyzes the oxidation of emodinanthrone to emodin. Emodin O-methyltransferase encoded by tpcA catalyzes methylation of the 8-hydroxy group of emodin to form questin. Ring cleavage of questin by questin oxidase tpcI leads to desmethylsulochrin via several intermediates including questin epoxide. Another methylation step catalyzed by tpcM leads to the formation of sulochrin which is further converted to monomethylsulfochrin by tpcH. Finally, the tpcJ catalyzes the conversion of monomethylsulfochrin to trypacidin. Trypacidin is toxic for human pulmonary and bronchial epithelial cells by initiating the intracellular formation of nitric oxide (NO) and hydrogen peroxide (H(2)O(2)), thus triggering host necrotic cell death. The trypacidin pathway is also able to produce endocrocin via a distinct route from the endocrocin Enc pathway. This chain is Glutathione S-transferase-like protein tpcF, found in Aspergillus fumigatus (strain ATCC MYA-4609 / CBS 101355 / FGSC A1100 / Af293) (Neosartorya fumigata).